Here is a 206-residue protein sequence, read N- to C-terminus: LexA repressor (206 aa).

The segment at residues 28–48 (RAEIATRLGFKSANAAEEHLK) is a DNA-binding region (H-T-H motif). Catalysis depends on for autocatalytic cleavage activity residues S123 and K160.

The protein belongs to the peptidase S24 family. Homodimer.

The catalysed reaction is Hydrolysis of Ala-|-Gly bond in repressor LexA.. Its function is as follows. Represses a number of genes involved in the response to DNA damage (SOS response), including recA and lexA. In the presence of single-stranded DNA, RecA interacts with LexA causing an autocatalytic cleavage which disrupts the DNA-binding part of LexA, leading to derepression of the SOS regulon and eventually DNA repair. In Shewanella sp. (strain MR-7), this protein is LexA repressor.